The sequence spans 58 residues: Ribulose bisphosphate carboxylase large chain (58 aa).

The propeptide occupies 1-2; it reads MS. Residue Pro3 is modified to N-acetylproline. Position 14 is an N6,N6,N6-trimethyllysine (Lys14).

This sequence belongs to the RuBisCO large chain family. Type I subfamily. In terms of assembly, heterohexadecamer of 8 large chains and 8 small chains.

It localises to the plastid. It is found in the chloroplast. The catalysed reaction is 2 (2R)-3-phosphoglycerate + 2 H(+) = D-ribulose 1,5-bisphosphate + CO2 + H2O. It carries out the reaction D-ribulose 1,5-bisphosphate + O2 = 2-phosphoglycolate + (2R)-3-phosphoglycerate + 2 H(+). RuBisCO catalyzes two reactions: the carboxylation of D-ribulose 1,5-bisphosphate, the primary event in carbon dioxide fixation, as well as the oxidative fragmentation of the pentose substrate in the photorespiration process. Both reactions occur simultaneously and in competition at the same active site. This chain is Ribulose bisphosphate carboxylase large chain (rbcL), found in Rosa damascena (Damask rose).